A 115-amino-acid polypeptide reads, in one-letter code: Con-Ins T1A (115 aa).

The signal sequence occupies residues 1 to 24 (MTTSFYFLLMALGLLLYVCQSSFG). Residues 25–29 (NQHTR) constitute a propeptide that is removed on maturation. P34 carries the 4-hydroxyproline; partial modification. 3 cysteine pairs are disulfide-bonded: C38–C101, C50–C114, and C100–C105. The residue at position 41 (E41) is a 4-carboxyglutamate. The propeptide at 53–94 (KRNDAGKKRGRASPLWQRGGSLSMLKARAKRNEAFHLQRAHR) is c peptide. E98 bears the 4-carboxyglutamate mark. P104 bears the 4-hydroxyproline; partial mark. E109 bears the 4-carboxyglutamate; partial mark. Residue C114 is modified to Cysteine amide.

It belongs to the insulin family. Heterodimer of A and B chains; disulfide-linked. In terms of tissue distribution, expressed by the venom gland.

It localises to the secreted. This venom insulin, from a fish-hunting cone snail, facilitates prey capture by rapidly inducing hypoglycemic shock. It is one of the smallest known insulin found in nature and lacks the C-terminal segment of the B chain that, in human insulin, mediates engagement of the insulin receptor (INSR) and assembly of the hormone's hexameric storage form. Despite lacking this segment, it both binds and activates human insulin receptor (long isoform (HIR-B)) with a high potency (EC(50)=12.0 nM). In vivo, intraperitoneal injection of this peptide into zebrafish lowers blood glucose with a lower potency than human insulin. In addition, when applied to water, this peptide reduces overall locomotor activity of zebrafish larvae, observed as a significant decrease in the percentage of time spent swimming and movement frequency. When tested on a mouse model of diabetes, this insulin also lowers blood glucose with a 10-fold lower potency than human insulin. This chain is Con-Ins T1A, found in Conus tulipa (Fish-hunting cone snail).